A 758-amino-acid chain; its full sequence is GPI ethanolamine phosphate transferase 2 (758 aa).

Residues asparagine 28, asparagine 77, and asparagine 178 are each glycosylated (N-linked (GlcNAc...) asparagine). The next 3 helical transmembrane spans lie at 405-425, 431-451, and 455-472; these read LVAISILGACSILSLILFRNL, LLAFAPFVVQNIIIVFSSSFI, and HVIWYFAAVSLSLLQLLN. The N-linked (GlcNAc...) asparagine glycan is linked to asparagine 493. 6 consecutive transmembrane segments (helical) span residues 533 to 553, 561 to 581, 598 to 618, 667 to 687, 698 to 718, and 733 to 753; these read PSPINFLSSMFIAFYKLMPII, PIIASFDYTFFVRIIWSLLLI, LFILLLTRLENMGLYLLYDIW, IFAVGILLFTSVFAGALWWCL, VKTFWIMSSISLTFLCISCFI, and LLYNASWASMYFLAKCLISTI.

The protein belongs to the PIGG/PIGN/PIGO family. PIGG subfamily.

The protein localises to the endoplasmic reticulum membrane. Its pathway is glycolipid biosynthesis; glycosylphosphatidylinositol-anchor biosynthesis. Its function is as follows. Ethanolamine phosphate transferase involved in glycosylphosphatidylinositol-anchor biosynthesis. Transfers ethanolamine phosphate to the GPI second mannose. The sequence is that of GPI ethanolamine phosphate transferase 2 (las21) from Schizosaccharomyces pombe (strain 972 / ATCC 24843) (Fission yeast).